Reading from the N-terminus, the 428-residue chain is D-amino acid dehydrogenase (428 aa).

Residue valine 3–tyrosine 17 participates in FAD binding.

Belongs to the DadA oxidoreductase family. FAD is required as a cofactor.

It catalyses the reaction a D-alpha-amino acid + A + H2O = a 2-oxocarboxylate + AH2 + NH4(+). Its pathway is amino-acid degradation; D-alanine degradation; NH(3) and pyruvate from D-alanine: step 1/1. Oxidative deamination of D-amino acids. The sequence is that of D-amino acid dehydrogenase from Burkholderia vietnamiensis (strain G4 / LMG 22486) (Burkholderia cepacia (strain R1808)).